The following is a 123-amino-acid chain: MPNITFTSPIMKKDKTIYAVAGNTATILALAKEHAIPIPFECGDGDCASCLIEVTHLDNKPAMAMMLTEKEKARLKELQMITAEEIEAAEVSDLPPRFRLACQFIPRDEDVMVHFTGTPGGSV.

The 2Fe-2S ferredoxin-type domain maps to 2 to 119 (PNITFTSPIM…DVMVHFTGTP (118 aa)). [2Fe-2S] cluster contacts are provided by Cys42, Cys47, Cys50, and Cys102.

Belongs to the 2Fe2S plant-type ferredoxin family. It depends on [2Fe-2S] cluster as a cofactor.

In terms of biological role, ferredoxins are iron-sulfur proteins that transfer electrons in a wide variety of metabolic reactions. This ferredoxin probably participates in nitrogen fixation. The protein is Ferredoxin-5 (fdxD) of Rhodobacter capsulatus (Rhodopseudomonas capsulata).